The following is a 682-amino-acid chain: Actin-binding LIM protein 3 (682 aa).

Met1 is modified (N-acetylmethionine). LIM zinc-binding domains lie at 21–80 (IQCY…LYGT), 80–140 (TRCD…MTSS), 149–208 (SHCA…QFGI), and 208–268 (IKCE…ARAE). 8 positions are modified to phosphoserine: Ser277, Ser280, Ser282, Ser286, Ser290, Ser337, Ser372, and Ser373. 2 disordered regions span residues 372–426 (SSPG…SYQA) and 440–475 (YRKPPIYKRHGDLSTATKSKTSEDISQASKYSPAYS). Tyr376 carries the phosphotyrosine modification. Residues Ser379 and Ser388 each carry the phosphoserine modification. 3 stretches are compositionally biased toward polar residues: residues 380 to 393 (PTYSRQGMSPTFSR), 405 to 425 (GRSSPYHSQLDVRSSTPTSYQ), and 453 to 466 (STATKSKTSEDISQ). Residues Ser492, Ser502, and Ser503 each carry the phosphoserine modification. The residue at position 542 (Thr542) is a Phosphothreonine. Phosphoserine is present on residues Ser566, Ser575, and Ser606. Residues 614 to 682 (MREYKIYPYE…NELKKQARLF (69 aa)) form the HP domain. Position 630 is an omega-N-methylarginine (Arg630).

In terms of assembly, directly interacts with F-actin and ABRA. In terms of tissue distribution, expressed in heart, brain, lung and liver. In the brain, highly expressed in the olfactory bulb. In the hippocampus, expressed selectively in the CA2 and CA3 fields. In the cerebellum, expressed in internal granular cells.

It localises to the cytoplasm. In terms of biological role, may act as scaffold protein. May stimulate ABRA activity and ABRA-dependent SRF transcriptional activity. This Mus musculus (Mouse) protein is Actin-binding LIM protein 3 (Ablim3).